Here is a 147-residue protein sequence, read N- to C-terminus: Cyanate hydratase (147 aa).

Active-site residues include arginine 88, glutamate 91, and serine 114.

This sequence belongs to the cyanase family.

It carries out the reaction cyanate + hydrogencarbonate + 3 H(+) = NH4(+) + 2 CO2. In terms of biological role, catalyzes the reaction of cyanate with bicarbonate to produce ammonia and carbon dioxide. The polypeptide is Cyanate hydratase (Parasynechococcus marenigrum (strain WH8102)).